The chain runs to 2443 residues: Non-reducing polyketide synthase olcA (2443 aa).

Positions 5–442 constitute a Ketosynthase family 3 (KS3) domain; sequence IEPIAIVGTG…GANVHAILES (438 aa). Residues C178, H317, and H362 each act as for beta-ketoacyl synthase activity in the active site. A malonyl-CoA:ACP transacylase (MAT) domain region spans residues 550-885; that stretch reads GVFTGQGAQW…AAIGSLWTYL (336 aa). The For acyl/malonyl transferase activity role is filled by S645. The interval 940-1070 is N-terminal hotdog fold; it reads NCLLGVLSPD…GVLTMTLGSA (131 aa). The region spanning 940-1231 is the PKS/mFAS DH domain; that stretch reads NCLLGVLSPD…LVPLLEDLAD (292 aa). The product template (PT) domain stretch occupies residues 989–1497; that stretch reads ALESAKLIAG…SLPVTISNMR (509 aa). The interval 1085–1231 is C-terminal hotdog fold; sequence MRAVDIEDFY…LVPLLEDLAD (147 aa). The interval 1771-2159 is methyltransferase (CMeT) domain; it reads NKRYLAHTHV…LERFTCALPP (389 aa). One can recognise a Carrier domain in the interval 2359-2434; sequence EILTSHLLTQ…EITSSAAAKL (76 aa). S2394 carries the post-translational modification O-(pantetheine 4'-phosphoryl)serine.

The enzyme catalyses nicotinyl-CoA + 2 malonyl-CoA + H(+) = 4-hydroxy-6-(pyridin-3-yl)-2H-pyran-2-one + 2 CO2 + 3 CoA. The protein operates within secondary metabolite biosynthesis; terpenoid biosynthesis. In terms of biological role, non-reducing polyketide synthase; part of the gene cluster that mediates the biosynthesis of 15-deoxyoxalicine B. The first step of the pathway is the synthesis of nicotinyl-CoA from nicotinic acid by the nicotinic acid-CoA ligase olcI. Nicotinyl-CoA is then a substrate of polyketide synthase olcA to produce 4-hydroxy-6-(3-pyridinyl)-2H-pyran-2-one (HPPO) which is further prenylated by the polyprenyl transferase olcH to yield geranylgeranyl-HPPO. Geranylgeranyl pyrophosphate is provided by the cluster-specific geranylgeranyl pyrophosphate synthase olcC. The FAD-dependent monooxygenase olcE catalyzes the epoxidation of geranylgeranyl-HPPO and the terpene cyclase olcD catalyzes the cyclization of the terpenoid component, resulting in the formation of the tricyclic terpene moiety seen in predecaturin E. The cytochrome P450 monooxygenase then catalyzes the allylic oxidation of predecaturin E, which is followed by spirocylization with concomitant loss of one molecule of water to form decaturin E. Decaturin E is the substrate of the cytochrome P450 monooxygenase olcJ which hydroxylates it at the C-29 position to form decaturin F. The short-chain dehydrogenase/reductase olcF may catalyze the oxidation of decaturin F to generate the 29-hydroxyl-27-one intermediate, and subsequent hemiacetal formation probably leads to the formation of decaturin C. The dioxygenase olcK may be a peroxisomal enzyme that catalyzes the hydroxylation of decaturin C into decaturin A once decaturin C is shuttled into the peroxisome by the MFS transporter olcL. Finally the cytochrome P450 monooxygenase olcB catalyzes the oxidative rearrangement to yield 15-deoxyoxalicine B. In the absence of olcJ, decaturin E may be shunted to a pathway in which it is oxidized to a ketone, possibly by olcF, to form decaturin D, which undergoes further allylic oxidation to yield decaturin G. Moreover, in the absence of oclK or oclL, oclB can convert decaturin C into 15-deoxyoxalicine A. The protein is Non-reducing polyketide synthase olcA of Penicillium canescens.